Here is a 347-residue protein sequence, read N- to C-terminus: Quinolinate synthase (347 aa).

Iminosuccinate contacts are provided by His-47 and Ser-68. Cys-113 lines the [4Fe-4S] cluster pocket. Iminosuccinate is bound by residues 139–141 (YAN) and Ser-156. Cys-200 serves as a coordination point for [4Fe-4S] cluster. Residues 226-228 (HPE) and Thr-243 contribute to the iminosuccinate site. Cys-297 contacts [4Fe-4S] cluster.

Belongs to the quinolinate synthase family. Type 1 subfamily. Requires [4Fe-4S] cluster as cofactor.

It localises to the cytoplasm. The catalysed reaction is iminosuccinate + dihydroxyacetone phosphate = quinolinate + phosphate + 2 H2O + H(+). It participates in cofactor biosynthesis; NAD(+) biosynthesis; quinolinate from iminoaspartate: step 1/1. In terms of biological role, catalyzes the condensation of iminoaspartate with dihydroxyacetone phosphate to form quinolinate. The polypeptide is Quinolinate synthase (Salmonella typhi).